Reading from the N-terminus, the 355-residue chain is Peptide chain release factor 1 (355 aa).

The residue at position 233 (glutamine 233) is an N5-methylglutamine.

It belongs to the prokaryotic/mitochondrial release factor family. Methylated by PrmC. Methylation increases the termination efficiency of RF1.

It localises to the cytoplasm. Peptide chain release factor 1 directs the termination of translation in response to the peptide chain termination codons UAG and UAA. This Desulforudis audaxviator (strain MP104C) protein is Peptide chain release factor 1.